A 330-amino-acid polypeptide reads, in one-letter code: MALKASPVTGLFPPLRPTASSSPSTSSNRPCSLRILPLRTSFFGNSSGALRVNVLRLACDNRLRCNGHGATMNLFERFSRVVKSYANALISSFEDPEKILEQTVIEMNSDLTKMRQATAQVLASQKQLQNKYKAAQQSSDDWYKRAQLALAKGDEDLAREALKRRKSFADNATALKTQLDQQKGVVDNLVSNTRLLESKIQEAKAKKDTLLARARTAKTATKVQEMIGTVNTSGALSAFEKMEEKVMAMESEADALTQIGTDELEGKFQMLETSSVDDDLADLKKELSGSSKKGELPPGRSTVAASTRYPFKDSEIENELNELRRKANDF.

Residues methionine 1–arginine 64 constitute a chloroplast transit peptide. 2 coiled-coil regions span residues serine 124–isoleucine 259 and lysine 312–aspartate 329. Residues leucine 287–lysine 312 are disordered.

The protein belongs to the PspA/Vipp/IM30 family. As to quaternary structure, homomultimer. Complex formation involves interaction via the central alpha-helical domain (71-286).

The protein localises to the plastid. Its subcellular location is the chloroplast inner membrane. It is found in the chloroplast thylakoid membrane. Its function is as follows. Required for plastid vesicle formation and thylakoid membrane biogenesis, but not for functional assembly of thylakoid protein complexes. This Arabidopsis thaliana (Mouse-ear cress) protein is Membrane-associated protein VIPP1, chloroplastic.